The sequence spans 232 residues: Flagellar L-ring protein (232 aa).

The signal sequence occupies residues 1-21; that stretch reads MQKNAAHTYAISSLLVLSLTG. Cysteine 22 carries N-palmitoyl cysteine lipidation. Cysteine 22 carries the S-diacylglycerol cysteine lipid modification.

It belongs to the FlgH family. The basal body constitutes a major portion of the flagellar organelle and consists of four rings (L,P,S, and M) mounted on a central rod.

Its subcellular location is the cell outer membrane. The protein localises to the bacterial flagellum basal body. In terms of biological role, assembles around the rod to form the L-ring and probably protects the motor/basal body from shearing forces during rotation. This chain is Flagellar L-ring protein, found in Shigella boydii serotype 4 (strain Sb227).